A 522-amino-acid chain; its full sequence is Protein disulfide-isomerase (522 aa).

Positions 1-28 (MKFSAGAVLSWSSLLLASSVFAQQEAVA) form a signal peptide, or 22. A Thioredoxin 1 domain is found at 29-141 (PEDSAVVKLA…VQFMIKQSQP (113 aa)). Residues Cys61 and Cys64 each act as nucleophile in the active site. Cysteines 61 and 64 form a disulfide. Asn82, Asn117, Asn155, and Asn174 each carry an N-linked (GlcNAc...) asparagine glycan. A Thioredoxin 2 domain is found at 356-485 (FLKGDASPIV…LFDFIKENGH (130 aa)). Active-site nucleophile residues include Cys406 and Cys409. A disulfide bridge connects residues Cys406 and Cys409. Asn425 carries an N-linked (GlcNAc...) asparagine glycan. Positions 497-522 (AQEKAAEEADADAELADEEDAIHDEL) are disordered. Acidic residues predominate over residues 504–522 (EADADAELADEEDAIHDEL). Positions 519–522 (HDEL) match the Prevents secretion from ER motif.

Belongs to the protein disulfide isomerase family. In terms of assembly, interacts with EPS1, KAR2 and MNL1. In terms of processing, the N-terminus is blocked.

It localises to the endoplasmic reticulum lumen. It catalyses the reaction Catalyzes the rearrangement of -S-S- bonds in proteins.. Protein disulfide isomerase of ER lumen required for formation of disulfide bonds in secretory and cell-surface proteins and which unscrambles non-native disulfide bonds. Forms a complex with MNL1 to process unfolded protein-bound Man8GlcNAc2 oligosaccharides to Man7GlcNAc2, promoting degradation in unfolded protein response. The chain is Protein disulfide-isomerase (PDI1) from Saccharomyces cerevisiae (strain ATCC 204508 / S288c) (Baker's yeast).